The following is a 118-amino-acid chain: Small ribosomal subunit protein uS13 (118 aa).

Residues 92–118 (RKGLPVRGQRTKTNARTRKGPRKPIRK) are disordered.

It belongs to the universal ribosomal protein uS13 family. As to quaternary structure, part of the 30S ribosomal subunit. Forms a loose heterodimer with protein S19. Forms two bridges to the 50S subunit in the 70S ribosome.

In terms of biological role, located at the top of the head of the 30S subunit, it contacts several helices of the 16S rRNA. In the 70S ribosome it contacts the 23S rRNA (bridge B1a) and protein L5 of the 50S subunit (bridge B1b), connecting the 2 subunits; these bridges are implicated in subunit movement. Contacts the tRNAs in the A and P-sites. In Pseudomonas putida (strain W619), this protein is Small ribosomal subunit protein uS13.